Consider the following 156-residue polypeptide: Small ribosomal subunit protein uS7 (156 aa).

The protein belongs to the universal ribosomal protein uS7 family. As to quaternary structure, part of the 30S ribosomal subunit. Contacts proteins S9 and S11.

Functionally, one of the primary rRNA binding proteins, it binds directly to 16S rRNA where it nucleates assembly of the head domain of the 30S subunit. Is located at the subunit interface close to the decoding center, probably blocks exit of the E-site tRNA. This is Small ribosomal subunit protein uS7 from Bacillus cereus (strain G9842).